The sequence spans 130 residues: Small ribosomal subunit protein uS9 (130 aa).

It belongs to the universal ribosomal protein uS9 family.

The protein is Small ribosomal subunit protein uS9 of Pseudomonas putida (strain W619).